The chain runs to 532 residues: Putative L-lactate permease (532 aa).

The next 14 helical transmembrane spans lie at 23–43 (ALPS…VHLL), 56–76 (VVSA…AILF), 101–121 (VAQL…ASGF), 129–149 (APIL…ALIM), 152–172 (VPVS…ALKL), 180–200 (IGSI…LLAL), 213–233 (IVFI…IAQV), 234–254 (NYEF…VWAA), 274–294 (AGEV…LIVT), 346–366 (LLYV…IPFF), 387–407 (PFIA…GGEH), 420–440 (ISGS…SFFS), 462–482 (GISV…GNMV), and 508–528 (IIPM…LVPL).

Belongs to the lactate permease family.

The protein resides in the cell inner membrane. Functionally, may play a role in L-lactate transport. The protein is Putative L-lactate permease of Haemophilus influenzae (strain ATCC 51907 / DSM 11121 / KW20 / Rd).